Consider the following 493-residue polypeptide: Probable cytochrome P450 313a2 (493 aa).

Heme is bound at residue cysteine 438.

This sequence belongs to the cytochrome P450 family. The cofactor is heme.

It localises to the endoplasmic reticulum membrane. It is found in the microsome membrane. In terms of biological role, may be involved in the metabolism of insect hormones and in the breakdown of synthetic insecticides. The sequence is that of Probable cytochrome P450 313a2 (Cyp313a2) from Drosophila melanogaster (Fruit fly).